A 342-amino-acid polypeptide reads, in one-letter code: Nucleoid-associated protein Shewana3_2426 (342 aa).

Belongs to the YejK family.

The protein resides in the cytoplasm. The protein localises to the nucleoid. This Shewanella sp. (strain ANA-3) protein is Nucleoid-associated protein Shewana3_2426.